The chain runs to 697 residues: Putative cryptochrome DASH (697 aa).

The Photolyase/cryptochrome alpha/beta domain maps to 5 to 164 (KLLVYLLRRD…GFKLWHDEKY (160 aa)). Disordered regions lie at residues 170 to 215 (DNGL…FPSW) and 554 to 697 (FSVT…PPHI). The span at 188-198 (KTQEPLRERPR) shows a compositional bias: basic and acidic residues. The span at 560–569 (RGNRRPYRWR) shows a compositional bias: basic residues. Residues 578–590 (GRGGRGGGTGNTS) show a composition bias toward gly residues. 2 stretches are compositionally biased toward low complexity: residues 659-675 (QQQQQPQHQLQHYYAHQ) and 683-697 (RQQQQQFYHQIPPHI).

It belongs to the DNA photolyase class-1 family. FAD is required as a cofactor. The cofactor is (6R)-5,10-methylene-5,6,7,8-tetrahydrofolate.

Its function is as follows. May have a photoreceptor function. The protein is Putative cryptochrome DASH of Gibberella zeae (strain ATCC MYA-4620 / CBS 123657 / FGSC 9075 / NRRL 31084 / PH-1) (Wheat head blight fungus).